Here is a 282-residue protein sequence, read N- to C-terminus: Large ribosomal subunit protein uL2 (282 aa).

Residues 223–282 are disordered; sequence TVRGSVMNPNDHPHGGGEGRAPIGRKSPVTPWGKKALGVKTRNTKKTSEKLIVRKRSNKK.

This sequence belongs to the universal ribosomal protein uL2 family. As to quaternary structure, part of the 50S ribosomal subunit. Forms a bridge to the 30S subunit in the 70S ribosome.

In terms of biological role, one of the primary rRNA binding proteins. Required for association of the 30S and 50S subunits to form the 70S ribosome, for tRNA binding and peptide bond formation. It has been suggested to have peptidyltransferase activity; this is somewhat controversial. Makes several contacts with the 16S rRNA in the 70S ribosome. This Mycoplasma mycoides subsp. mycoides SC (strain CCUG 32753 / NCTC 10114 / PG1) protein is Large ribosomal subunit protein uL2.